The chain runs to 186 residues: Protein GrpE (186 aa).

Residues 1 to 17 show a composition bias toward basic and acidic residues; the sequence is MKDEHNQEHDLSQKELE. The interval 1-32 is disordered; that stretch reads MKDEHNQEHDLSQKELESCENSCTCEGKKQEA.

Belongs to the GrpE family. Homodimer.

The protein localises to the cytoplasm. Its function is as follows. Participates actively in the response to hyperosmotic and heat shock by preventing the aggregation of stress-denatured proteins, in association with DnaK and GrpE. It is the nucleotide exchange factor for DnaK and may function as a thermosensor. Unfolded proteins bind initially to DnaJ; upon interaction with the DnaJ-bound protein, DnaK hydrolyzes its bound ATP, resulting in the formation of a stable complex. GrpE releases ADP from DnaK; ATP binding to DnaK triggers the release of the substrate protein, thus completing the reaction cycle. Several rounds of ATP-dependent interactions between DnaJ, DnaK and GrpE are required for fully efficient folding. This chain is Protein GrpE, found in Helicobacter acinonychis (strain Sheeba).